A 262-amino-acid chain; its full sequence is Histone chaperone cia1 (262 aa).

Residues 157–262 (IQWDNPDFDD…KPEEKPETSQ (106 aa)) are disordered. 2 coiled-coil regions span residues 173 to 196 (DADE…EGEG) and 223 to 253 (KGSE…AEEK). Composition is skewed to acidic residues over residues 173–219 (DADE…GEGE) and 226–242 (EEEE…EEES). Residues 250–262 (AEEKPEEKPETSQ) show a composition bias toward basic and acidic residues.

It belongs to the ASF1 family. Interacts with histone H3 and histone H4.

The protein resides in the nucleus. Histone chaperone that facilitates histone deposition and histone exchange and removal during nucleosome assembly and disassembly. The protein is Histone chaperone cia1 (cia1) of Schizosaccharomyces pombe (strain 972 / ATCC 24843) (Fission yeast).